A 93-amino-acid chain; its full sequence is Long neurotoxin 2 (93 aa).

The first 21 residues, 1 to 21 (MKILLLTLVVVTIVCLDLAYT), serve as a signal peptide directing secretion. Cystine bridges form between Cys24-Cys42, Cys35-Cys63, Cys48-Cys52, Cys67-Cys78, and Cys79-Cys84.

It belongs to the three-finger toxin family. Long-chain subfamily. Type II alpha-neurotoxin sub-subfamily. In terms of tissue distribution, expressed by the venom gland.

The protein localises to the secreted. In terms of biological role, binds with high affinity to muscular (alpha-1/CHRNA1) and neuronal (alpha-7/CHRNA7) nicotinic acetylcholine receptor (nAChR) and inhibits acetylcholine from binding to the receptor, thereby impairing neuromuscular and neuronal transmission. In Hydrophis hardwickii (Hardwick's spine-bellied seasnake), this protein is Long neurotoxin 2.